The sequence spans 306 residues: D-alanine--D-alanine ligase (306 aa).

An ATP-grasp domain is found at 104–303 (KMLWKAFGLP…FEQLVVKILE (200 aa)). 134 to 189 (VAKLGLPLMVKPSLEGSSVGLTKVKAVEELKSAVEYALKFDNTILIEEWLAGDELT) contacts ATP. Mg(2+) is bound by residues Asp-257, Glu-270, and Asn-272.

It belongs to the D-alanine--D-alanine ligase family. Mg(2+) serves as cofactor. The cofactor is Mn(2+).

It is found in the cytoplasm. It carries out the reaction 2 D-alanine + ATP = D-alanyl-D-alanine + ADP + phosphate + H(+). It functions in the pathway cell wall biogenesis; peptidoglycan biosynthesis. Its function is as follows. Cell wall formation. The chain is D-alanine--D-alanine ligase from Haemophilus influenzae (strain PittGG).